The primary structure comprises 436 residues: UPF0597 protein YhaM (436 aa).

This sequence belongs to the UPF0597 family.

The chain is UPF0597 protein YhaM from Escherichia coli O6:H1 (strain CFT073 / ATCC 700928 / UPEC).